Here is a 163-residue protein sequence, read N- to C-terminus: Bacterial microcompartment assembly protein PduM (163 aa).

Belongs to the PduM family. As to quaternary structure, interacts with shell protein PduK.

Its subcellular location is the bacterial microcompartment. The protein operates within polyol metabolism; 1,2-propanediol degradation. Functionally, plays an essential role in assembly and/or stability of the bacterial microcompartment (BMC) dedicated to 1,2-propanediol (1,2-PD) degradation. Overexpression impairs BMC formation. The 1,2-PD-specific bacterial microcompartment (BMC) concentrates low levels of 1,2-PD catabolic enzymes, concentrates volatile reaction intermediates thus enhancing pathway flux and keeps the level of toxic, mutagenic propionaldehyde low. The protein is Bacterial microcompartment assembly protein PduM of Salmonella typhimurium (strain LT2 / SGSC1412 / ATCC 700720).